The chain runs to 432 residues: GTPase Obg (432 aa).

In terms of domain architecture, Obg spans 1 to 159 (MKFIDTAKFT…YEVKAELKVL (159 aa)). The region spanning 160-332 (ADVGFVGLPN…LLLKIAKELE (173 aa)) is the OBG-type G domain. GTP-binding positions include 166-173 (GLPNAGKS), 191-195 (FTTLN), 213-216 (DLPG), 284-287 (NKMD), and 313-315 (SGL). 2 residues coordinate Mg(2+): serine 173 and threonine 193. One can recognise an OCT domain in the interval 354 to 432 (RLEEDEEDIQ…VFEYELEWMD (79 aa)).

It belongs to the TRAFAC class OBG-HflX-like GTPase superfamily. OBG GTPase family. Monomer. It depends on Mg(2+) as a cofactor.

The protein resides in the cytoplasm. Functionally, an essential GTPase which binds GTP, GDP and possibly (p)ppGpp with moderate affinity, with high nucleotide exchange rates and a fairly low GTP hydrolysis rate. Plays a role in control of the cell cycle, stress response, ribosome biogenesis and in those bacteria that undergo differentiation, in morphogenesis control. The sequence is that of GTPase Obg from Mesoplasma florum (strain ATCC 33453 / NBRC 100688 / NCTC 11704 / L1) (Acholeplasma florum).